The sequence spans 115 residues: NADH-ubiquinone oxidoreductase chain 3 (115 aa).

3 helical membrane-spanning segments follow: residues 4-24 (LLVL…AFWL), 55-75 (FFLV…LLPL), and 87-107 (MTLT…YEWL).

The protein belongs to the complex I subunit 3 family. In terms of assembly, core subunit of respiratory chain NADH dehydrogenase (Complex I) which is composed of 45 different subunits. Interacts with TMEM186. Interacts with TMEM242.

Its subcellular location is the mitochondrion inner membrane. The enzyme catalyses a ubiquinone + NADH + 5 H(+)(in) = a ubiquinol + NAD(+) + 4 H(+)(out). In terms of biological role, core subunit of the mitochondrial membrane respiratory chain NADH dehydrogenase (Complex I) which catalyzes electron transfer from NADH through the respiratory chain, using ubiquinone as an electron acceptor. Essential for the catalytic activity of complex I. In Peromyscus eremicus (Cactus mouse), this protein is NADH-ubiquinone oxidoreductase chain 3.